A 153-amino-acid chain; its full sequence is Calmodulin-like protein 4 (153 aa).

4 EF-hand domains span residues 8–43 (DQIN…LGAS), 44–79 (PTPG…QIKQ), 81–116 (DPKK…LGEK), and 117–152 (LTHK…PVRD).

Belongs to the calmodulin family. Interacts with MYO7B; the interaction mediates the association of CALML4 with the IMAC/intermicrovillar adhesion complex. Interacts with MYO7A.

The protein localises to the cell projection. It localises to the microvillus. Its function is as follows. As part of the intermicrovillar adhesion complex/IMAC plays a role in epithelial brush border differentiation, controlling microvilli organization and length. Acts as a light chain for MYO7B and is required for efficient targeting of the IMAC to the tips of border brush microvilli. The sequence is that of Calmodulin-like protein 4 (CALML4) from Bos taurus (Bovine).